Consider the following 659-residue polypeptide: DNA ligase (659 aa).

NAD(+) contacts are provided by residues 32 to 36 (DQQYD), 81 to 82 (SL), and E110. Residue K112 is the N6-AMP-lysine intermediate of the active site. Positions 133, 167, 282, and 306 each coordinate NAD(+). Zn(2+)-binding residues include C399, C402, C415, and C420. The region spanning 582–659 (IKNNIFKNKK…QEHEFEELIK (78 aa)) is the BRCT domain.

It belongs to the NAD-dependent DNA ligase family. LigA subfamily. Mg(2+) is required as a cofactor. It depends on Mn(2+) as a cofactor.

The catalysed reaction is NAD(+) + (deoxyribonucleotide)n-3'-hydroxyl + 5'-phospho-(deoxyribonucleotide)m = (deoxyribonucleotide)n+m + AMP + beta-nicotinamide D-nucleotide.. In terms of biological role, DNA ligase that catalyzes the formation of phosphodiester linkages between 5'-phosphoryl and 3'-hydroxyl groups in double-stranded DNA using NAD as a coenzyme and as the energy source for the reaction. It is essential for DNA replication and repair of damaged DNA. The sequence is that of DNA ligase from Phytoplasma mali (strain AT).